Reading from the N-terminus, the 366-residue chain is Chorismate synthase (366 aa).

Residue Arg-48 coordinates NADP(+). FMN is bound by residues 125–127 (RSS), 238–239 (NA), Gly-278, 293–297 (KPTSS), and Arg-319.

Belongs to the chorismate synthase family. Homotetramer. Requires FMNH2 as cofactor.

It catalyses the reaction 5-O-(1-carboxyvinyl)-3-phosphoshikimate = chorismate + phosphate. The protein operates within metabolic intermediate biosynthesis; chorismate biosynthesis; chorismate from D-erythrose 4-phosphate and phosphoenolpyruvate: step 7/7. Catalyzes the anti-1,4-elimination of the C-3 phosphate and the C-6 proR hydrogen from 5-enolpyruvylshikimate-3-phosphate (EPSP) to yield chorismate, which is the branch point compound that serves as the starting substrate for the three terminal pathways of aromatic amino acid biosynthesis. This reaction introduces a second double bond into the aromatic ring system. The polypeptide is Chorismate synthase (Alkalilimnicola ehrlichii (strain ATCC BAA-1101 / DSM 17681 / MLHE-1)).